Here is a 153-residue protein sequence, read N- to C-terminus: D-erythrulose-4-phosphate isomerase 1 (153 aa).

Cysteine 69 serves as the catalytic Proton acceptor.

The protein belongs to the LacAB/RpiB family.

It catalyses the reaction D-erythrulose 4-phosphate = D-erythrose 4-phosphate. Its pathway is carbohydrate metabolism; erythritol degradation. The protein operates within carbohydrate metabolism; D-threitol degradation. In terms of biological role, catalyzes the isomerization of D-erythrulose-4P to D-erythrose-4P. Involved in the degradation pathways of erythritol and D-threitol, that allow M.smegmatis to grow on these compounds as the sole carbon source. The protein is D-erythrulose-4-phosphate isomerase 1 of Mycolicibacterium smegmatis (strain ATCC 700084 / mc(2)155) (Mycobacterium smegmatis).